A 131-amino-acid chain; its full sequence is C-type natriuretic peptide 1 (131 aa).

The signal sequence occupies residues 1–22; it reads MLCPVLLCATLLLLTPFEVTEA. Residues 23 to 109 constitute a propeptide that is removed on maturation; it reads RALHPSADAV…KRAEPDRSRR (87 aa). An intrachain disulfide couples C115 to C131.

Belongs to the natriuretic peptide family. Brain and spinal cord.

The protein localises to the secreted. Functionally, exhibits natriuretic and vasodepressant activity. Has cGMP-stimulating activity. May help to regulate body fluid homeostasis in a variety of aquatic environments. This Oryzias latipes (Japanese rice fish) protein is C-type natriuretic peptide 1.